A 439-amino-acid polypeptide reads, in one-letter code: Serine/threonine-protein kinase 2 (439 aa).

One can recognise a Protein kinase domain in the interval 87 to 439 (NDDFYHISTG…IFSDWINGGN (353 aa)). ATP-binding positions include 93-101 (ISTGGYGIV) and Lys-117. The active-site Proton acceptor is Asp-307.

The protein belongs to the protein kinase superfamily. Ser/Thr protein kinase family. Post-translationally, phosphorylated in vivo. Autophosphorylated in vitro.

The protein resides in the host endoplasmic reticulum. It is found in the host endoplasmic reticulum-Golgi intermediate compartment. The enzyme catalyses L-seryl-[protein] + ATP = O-phospho-L-seryl-[protein] + ADP + H(+). It catalyses the reaction L-threonyl-[protein] + ATP = O-phospho-L-threonyl-[protein] + ADP + H(+). Essential serine-protein kinase involved in the early stage of virion morphogenesis. This chain is Serine/threonine-protein kinase 2 (OPG054), found in Bos taurus (Bovine).